Here is a 923-residue protein sequence, read N- to C-terminus: Isoleucine--tRNA ligase (923 aa).

Residues 57–67 (PYANGDIHIGT) carry the 'HIGH' region motif. Glu561 lines the L-isoleucyl-5'-AMP pocket. The 'KMSKS' region signature appears at 602–606 (AMHKS). Lys605 serves as a coordination point for ATP. Cys895, Cys898, Cys915, and Cys918 together coordinate Zn(2+).

It belongs to the class-I aminoacyl-tRNA synthetase family. IleS type 1 subfamily. In terms of assembly, monomer. It depends on Zn(2+) as a cofactor.

The protein resides in the cytoplasm. The enzyme catalyses tRNA(Ile) + L-isoleucine + ATP = L-isoleucyl-tRNA(Ile) + AMP + diphosphate. In terms of biological role, catalyzes the attachment of isoleucine to tRNA(Ile). As IleRS can inadvertently accommodate and process structurally similar amino acids such as valine, to avoid such errors it has two additional distinct tRNA(Ile)-dependent editing activities. One activity is designated as 'pretransfer' editing and involves the hydrolysis of activated Val-AMP. The other activity is designated 'posttransfer' editing and involves deacylation of mischarged Val-tRNA(Ile). The polypeptide is Isoleucine--tRNA ligase (Brachyspira hyodysenteriae (strain ATCC 49526 / WA1)).